The chain runs to 553 residues: CTP synthase (553 aa).

Residues 1–270 are amidoligase domain; the sequence is MTKYVFVTGG…DRLICEELRL (270 aa). Ser-13 contributes to the CTP binding site. UTP is bound at residue Ser-13. Residues 14 to 19 and Asp-71 contribute to the ATP site; that span reads SLGKGI. Positions 71 and 144 each coordinate Mg(2+). CTP contacts are provided by residues 151 to 153, 191 to 196, and Lys-227; these read DIE and KTKPTQ. UTP-binding positions include 191 to 196 and Lys-227; that span reads KTKPTQ. A Glutamine amidotransferase type-1 domain is found at 295–547; sequence TIGMVGKYVD…VQAALACQQT (253 aa). L-glutamine is bound at residue Gly-356. The active-site Nucleophile; for glutamine hydrolysis is Cys-383. Residues 384-387, Glu-407, and Arg-473 each bind L-glutamine; that span reads LGMQ. Catalysis depends on residues His-520 and Glu-522.

The protein belongs to the CTP synthase family. As to quaternary structure, homotetramer.

It carries out the reaction UTP + L-glutamine + ATP + H2O = CTP + L-glutamate + ADP + phosphate + 2 H(+). The enzyme catalyses L-glutamine + H2O = L-glutamate + NH4(+). The catalysed reaction is UTP + NH4(+) + ATP = CTP + ADP + phosphate + 2 H(+). The protein operates within pyrimidine metabolism; CTP biosynthesis via de novo pathway; CTP from UDP: step 2/2. Its activity is regulated as follows. Allosterically activated by GTP, when glutamine is the substrate; GTP has no effect on the reaction when ammonia is the substrate. The allosteric effector GTP functions by stabilizing the protein conformation that binds the tetrahedral intermediate(s) formed during glutamine hydrolysis. Inhibited by the product CTP, via allosteric rather than competitive inhibition. Its function is as follows. Catalyzes the ATP-dependent amination of UTP to CTP with either L-glutamine or ammonia as the source of nitrogen. Regulates intracellular CTP levels through interactions with the four ribonucleotide triphosphates. This is CTP synthase from Burkholderia mallei (strain NCTC 10247).